A 103-amino-acid chain; its full sequence is Iron-sulfur cluster assembly protein CyaY (103 aa).

This sequence belongs to the frataxin family.

Functionally, involved in iron-sulfur (Fe-S) cluster assembly. May act as a regulator of Fe-S biogenesis. The protein is Iron-sulfur cluster assembly protein CyaY of Rickettsia africae (strain ESF-5).